The following is a 25-amino-acid chain: U11-ctenitoxin-Co1b (25 aa).

2 disulfides stabilise this stretch: Cys-4-Cys-18 and Cys-11-Cys-22.

Monomer. Expressed by the venom gland.

Its subcellular location is the secreted. Neurotoxin. In Ctenus ornatus (Brazilian spider), this protein is U11-ctenitoxin-Co1b.